A 332-amino-acid chain; its full sequence is Adenosine deaminase (332 aa).

The Zn(2+) site is built by His12 and His14. 3 residues coordinate substrate: His14, Asp16, and Gly170. His197 provides a ligand contact to Zn(2+). The Proton donor role is filled by Glu200. Asp278 contributes to the Zn(2+) binding site.

The protein belongs to the metallo-dependent hydrolases superfamily. Adenosine and AMP deaminases family. Adenosine deaminase subfamily. The cofactor is Zn(2+).

The enzyme catalyses adenosine + H2O + H(+) = inosine + NH4(+). The catalysed reaction is 2'-deoxyadenosine + H2O + H(+) = 2'-deoxyinosine + NH4(+). In terms of biological role, catalyzes the hydrolytic deamination of adenosine and 2-deoxyadenosine. The polypeptide is Adenosine deaminase (Clostridium perfringens (strain ATCC 13124 / DSM 756 / JCM 1290 / NCIMB 6125 / NCTC 8237 / Type A)).